The chain runs to 179 residues: MSEEIKEQNVQDAQNENLAPDSVNFDGLSDAAKVAELENKLNELTDKYYRANAEFENIKKRFEKEKTDIASYANEKFARDLLPVIDALEIAANFDPDDDEFAKNVKEGVLITINQFKKCFEKHGMSEIDTSGEFDPNVHNAVLRVDSEDHTSGQIVQVMQKGYIINGRVLRPAMVSVAN.

Positions 1–23 (MSEEIKEQNVQDAQNENLAPDSV) are disordered.

Belongs to the GrpE family. As to quaternary structure, homodimer.

It localises to the cytoplasm. Its function is as follows. Participates actively in the response to hyperosmotic and heat shock by preventing the aggregation of stress-denatured proteins, in association with DnaK and GrpE. It is the nucleotide exchange factor for DnaK and may function as a thermosensor. Unfolded proteins bind initially to DnaJ; upon interaction with the DnaJ-bound protein, DnaK hydrolyzes its bound ATP, resulting in the formation of a stable complex. GrpE releases ADP from DnaK; ATP binding to DnaK triggers the release of the substrate protein, thus completing the reaction cycle. Several rounds of ATP-dependent interactions between DnaJ, DnaK and GrpE are required for fully efficient folding. This Campylobacter curvus (strain 525.92) protein is Protein GrpE.